The following is a 351-amino-acid chain: MNSLTATAPIRAAIPKSYMHIATRNYSGVIAMSGLRCSGSLVANRHQTAGKRFISTTPKSQIKEFFPPPTAPHVKEVETAWVHPVYTEEQMKQVAIAHRDAKNWADWVALGTVRMLRWGMDLVTGYRHPPPGREHEARFKMTEQKWLTRFIFLESVAGVPGMVGGMLRHLRSLRRMKRDNGWIETLLEEAYNERMHLLTFLKLAEPGWFMRLMVLGAQGVFFNGFFLSYLMSPRICHRFVGYLEEEAVITYTRAIKEIEAGSLPAWEKTEAPEIAVQYWKMPEGQRSMKDLLLYVRADEAKHREVNHTLGNLNQAIDPNPYAAKYKDPTKAHPNKGIADLKPTGWEREEVI.

The helical transmembrane segment at 147 to 167 threads the bilayer; it reads LTRFIFLESVAGVPGMVGGML. Glutamate 154, glutamate 193, and histidine 196 together coordinate Fe cation. Residues 212-232 traverse the membrane as a helical segment; the sequence is LMVLGAQGVFFNGFFLSYLMS. Residues glutamate 244, glutamate 245, glutamate 299, and histidine 302 each contribute to the Fe cation site. The tract at residues 322–351 is disordered; the sequence is AAKYKDPTKAHPNKGIADLKPTGWEREEVI.

This sequence belongs to the alternative oxidase family. Fe cation serves as cofactor.

It localises to the mitochondrion inner membrane. Its function is as follows. Catalyzes cyanide-resistant oxygen consumption. May increase respiration when the cytochrome respiratory pathway is restricted, or in response to low temperatures. The chain is Alternative oxidase, mitochondrial (aox1) from Aspergillus niger.